The chain runs to 160 residues: Nucleotide-binding protein VV1636 (160 aa).

This sequence belongs to the YajQ family.

Functionally, nucleotide-binding protein. The sequence is that of Nucleotide-binding protein VV1636 from Vibrio vulnificus (strain YJ016).